The sequence spans 375 residues: uncharacterized protein (375 aa).

The interval 54 to 78 (EGIPPPTQSQEPLKPQENISRPIHH) is disordered.

This is an uncharacterized protein from Bos taurus (Bovine).